We begin with the raw amino-acid sequence, 953 residues long: Coatomer subunit beta (953 aa).

The residue at position 2 (threonine 2) is an N-acetylthreonine. 6 HEAT repeats span residues 96–131 (HEMI…KEAE), 132–168 (LLEP…NFEH), 240–276 (SERA…SAPT), 277–314 (AIKA…HPAH), 316–353 (RVLQ…SRNV), and 396–433 (DMAA…RFDN). At lysine 494 the chain carries N6-acetyllysine.

Oligomeric complex that consists of at least the alpha, beta, beta', gamma, delta, epsilon and zeta subunits. Interacts with CAPN8. Interacts with SCYL1 and PRKCE. Interacts with COPG1. Interacts with ARF1 (myristoylated); this interaction is required for binding of COPB1 to Golgi membranes. Interacts (via trunk domain) with ARF1 (via switch I region); the interaction is direct. Interacts with KCNK2 (via N-terminus); this interaction increases the channel-mediated whole cell currents and promotes plasma membrane expression of KCNK2. Interacts with STX17. Interacts with TMEM115. Interacts with TMEM41B. Post-translationally, proteolytically cleaved between Ser-528 and Ser-529 by CAPN8. In terms of tissue distribution, predominantly expressed in the upper one-third of the oxyntic mucosa and in most regions of the pyloric mucosa. Ubiquitously expressed including platelet, liver, heart, spleen, lung and kidney.

It localises to the cytoplasm. The protein localises to the golgi apparatus membrane. Its subcellular location is the cytoplasmic vesicle. It is found in the COPI-coated vesicle membrane. The protein resides in the cell membrane. It localises to the endoplasmic reticulum-Golgi intermediate compartment. Its function is as follows. The coatomer is a cytosolic protein complex that binds to dilysine motifs and reversibly associates with Golgi non-clathrin-coated vesicles, which further mediate biosynthetic protein transport from the ER, via the Golgi up to the trans Golgi network. Coatomer complex is required for budding from Golgi membranes, and is essential for the retrograde Golgi-to-ER transport of dilysine-tagged proteins. In mammals, the coatomer can only be recruited by membranes associated to ADP-ribosylation factors (ARFs), which are small GTP-binding proteins; the complex also influences the Golgi structural integrity, as well as the processing, activity, and endocytic recycling of LDL receptors. Involved in the Golgi disassembly and reassembly processes during cell cycle. Involved in autophagy by playing a role in early endosome function. Plays a role in organellar compartmentalization of secretory compartments including endoplasmic reticulum (ER)-Golgi intermediate compartment (ERGIC), Golgi, trans-Golgi network (TGN) and recycling endosomes, and in biosynthetic transport of CAV1. Plays a functional role in facilitating the transport of kappa-type opioid receptor mRNAs into axons and enhances translation of these proteins in cortical neurons. Required for limiting lipid storage in lipid droplets. Involved in lipid homeostasis by regulating the presence of perilipin family members PLIN2 and PLIN3 at the lipid droplet surface and promoting the association of adipocyte triglyceride lipase (PNPLA2) with the lipid droplet surface to mediate lipolysis. The protein is Coatomer subunit beta (Copb1) of Mus musculus (Mouse).